A 368-amino-acid polypeptide reads, in one-letter code: Agmatine deiminase (368 aa).

Cys-357 acts as the Amidino-cysteine intermediate in catalysis.

It belongs to the agmatine deiminase family. As to quaternary structure, homodimer.

The catalysed reaction is agmatine + H2O = N-carbamoylputrescine + NH4(+). It participates in amine and polyamine biosynthesis; putrescine biosynthesis via agmatine pathway; N-carbamoylputrescine from agmatine: step 1/1. Its function is as follows. Mediates the hydrolysis of agmatine into N-carbamoylputrescine in the arginine decarboxylase (ADC) pathway of putrescine biosynthesis, a basic polyamine. In Pseudomonas fluorescens (strain SBW25), this protein is Agmatine deiminase.